Reading from the N-terminus, the 135-residue chain is Small ribosomal subunit protein bS16 (135 aa).

This sequence belongs to the bacterial ribosomal protein bS16 family.

The protein is Small ribosomal subunit protein bS16 of Prosthecochloris aestuarii (strain DSM 271 / SK 413).